The chain runs to 119 residues: Beta-2-microglobulin (119 aa).

A signal peptide spans 1–20; it reads MARFVVVPLLVLLSLFGLEA. One can recognise an Ig-like C1-type domain in the interval 25-114; sequence PKIQVYSRYP…VTFSTPKTVK (90 aa). A disulfide bridge links Cys-45 with Cys-100.

This sequence belongs to the beta-2-microglobulin family. In terms of assembly, heterodimer of an alpha chain and a beta chain. Beta-2-microglobulin is the beta-chain of major histocompatibility complex class I molecules.

The protein localises to the secreted. Its function is as follows. Component of the class I major histocompatibility complex (MHC). Involved in the presentation of peptide antigens to the immune system. This is Beta-2-microglobulin (B2M) from Saguinus bicolor bicolor (Pied bare-faced tamarin).